Consider the following 435-residue polypeptide: Glutamyl-tRNA reductase (435 aa).

Substrate is bound by residues 49–52 (TCNR), S114, 119–121 (EPQ), and Q125. The Nucleophile role is filled by C50. 204 to 209 (GAGETI) contacts NADP(+).

Belongs to the glutamyl-tRNA reductase family. As to quaternary structure, homodimer.

The catalysed reaction is (S)-4-amino-5-oxopentanoate + tRNA(Glu) + NADP(+) = L-glutamyl-tRNA(Glu) + NADPH + H(+). Its pathway is porphyrin-containing compound metabolism; protoporphyrin-IX biosynthesis; 5-aminolevulinate from L-glutamyl-tRNA(Glu): step 1/2. Catalyzes the NADPH-dependent reduction of glutamyl-tRNA(Glu) to glutamate 1-semialdehyde (GSA). In Actinobacillus succinogenes (strain ATCC 55618 / DSM 22257 / CCUG 43843 / 130Z), this protein is Glutamyl-tRNA reductase.